Consider the following 322-residue polypeptide: tRNA-dihydrouridine synthase B (322 aa).

FMN contacts are provided by residues 16–18 (PMA) and Gln70. The active-site Proton donor is Cys100. FMN-binding positions include Lys139, 200-202 (NGD), and 224-225 (GR).

This sequence belongs to the Dus family. DusB subfamily. It depends on FMN as a cofactor.

It carries out the reaction a 5,6-dihydrouridine in tRNA + NAD(+) = a uridine in tRNA + NADH + H(+). It catalyses the reaction a 5,6-dihydrouridine in tRNA + NADP(+) = a uridine in tRNA + NADPH + H(+). Its function is as follows. Catalyzes the synthesis of 5,6-dihydrouridine (D), a modified base found in the D-loop of most tRNAs, via the reduction of the C5-C6 double bond in target uridines. The protein is tRNA-dihydrouridine synthase B of Vibrio vulnificus (strain CMCP6).